The sequence spans 365 residues: MTIMAPRTLLLLLSGALSVTETWAGSHSMRYFSTTVSRPGRGEPRYIEVGYVDDTQFVRFDSDAASPRMEPRAPWVEQEGPEYWVLQTRNSKASAQTFRVNLQTLLGYYNQSEAGFHTIQWMYGCDLGPDGRLLRGYHQYAYDGKDYIALNEDLRSWTAADAAAQITQRKWAEANAAEGMRAYLEGTCVEWLRRHLENGKEMLQRAEPPKTHVTHHPVSDHEATLRCWALGFYPAEITLTWQRDGEDQAQDMELVETRPTGNGTFQKWAAVVVLSGEEHKYTCHVQHEGLPEPFTLRWEPPSQPTIPIMGIVAILAILGAVVTGAVVAAVMWRKKSSDKKGGSYSQAARSDSAQGSDVSLTACKV.

Positions 1-24 (MTIMAPRTLLLLLSGALSVTETWA) are cleaved as a signal peptide. The segment at 25 to 114 (GSHSMRYFST…LLGYYNQSEA (90 aa)) is alpha-1. Residues 25–308 (GSHSMRYFST…EPPSQPTIPI (284 aa)) are Extracellular-facing. N110 carries N-linked (GlcNAc...) asparagine glycosylation. Residues 115–206 (GFHTIQWMYG…ENGKEMLQRA (92 aa)) are alpha-2. 2 disulfides stabilise this stretch: C125–C188 and C227–C283. Residues 207 to 298 (EPPKTHVTHH…GLPEPFTLRW (92 aa)) are alpha-3. The region spanning 209 to 297 (PKTHVTHHPV…EGLPEPFTLR (89 aa)) is the Ig-like C1-type domain. Residues 299 to 308 (EPPSQPTIPI) form a connecting peptide region. Residues 309 to 332 (MGIVAILAILGAVVTGAVVAAVMW) form a helical membrane-spanning segment. Over 333-365 (RKKSSDKKGGSYSQAARSDSAQGSDVSLTACKV) the chain is Cytoplasmic. The segment at 337 to 365 (SDKKGGSYSQAARSDSAQGSDVSLTACKV) is disordered. Polar residues predominate over residues 346–359 (QAARSDSAQGSDVS). Residues S356 and S359 each carry the phosphoserine modification.

The protein belongs to the MHC class I family. As to quaternary structure, heterodimer of an alpha chain and a beta chain (beta-2-microglobulin).

The protein localises to the membrane. Functionally, involved in the presentation of foreign antigens to the immune system. In Saguinus oedipus (Cotton-top tamarin), this protein is Saoe class I histocompatibility antigen, C alpha chain.